Reading from the N-terminus, the 706-residue chain is Polyribonucleotide nucleotidyltransferase (706 aa).

The Mg(2+) site is built by aspartate 488 and aspartate 494. In terms of domain architecture, KH spans 555–614 (PRLFTMKINPDKIRDVIGKGGSVIRALTEETGTQINIDEDGTITIASADPAKAEEAKRRI). Residues 624-692 (GKIYEGPITK…EKGRIKLSMK (69 aa)) enclose the S1 motif domain.

It belongs to the polyribonucleotide nucleotidyltransferase family. The cofactor is Mg(2+).

The protein localises to the cytoplasm. The catalysed reaction is RNA(n+1) + phosphate = RNA(n) + a ribonucleoside 5'-diphosphate. Functionally, involved in mRNA degradation. Catalyzes the phosphorolysis of single-stranded polyribonucleotides processively in the 3'- to 5'-direction. The chain is Polyribonucleotide nucleotidyltransferase from Albidiferax ferrireducens (strain ATCC BAA-621 / DSM 15236 / T118) (Rhodoferax ferrireducens).